Reading from the N-terminus, the 302-residue chain is Glycine N-acyltransferase-like protein 1 (302 aa).

The protein belongs to the glycine N-acyltransferase family. As to expression, expressed in liver and kidney and, at lower levels, in pancreas, testis, ovary and stomach.

The enzyme catalyses an acyl-CoA + L-glutamine = an N(2)-acyl-L-glutamine + CoA + H(+). Functionally, acyltransferase which transfers an acyl group to the N-terminus of glutamine. Can use phenylacetyl-CoA as an acyl donor. The chain is Glycine N-acyltransferase-like protein 1 from Homo sapiens (Human).